The sequence spans 610 residues: Cytosolic 5'-nucleotidase 1B (610 aa).

Disordered regions lie at residues methionine 1–glycine 34 and glycine 101–aspartate 277. Residues lysine 9–glycine 34 are compositionally biased toward basic and acidic residues. Residues serine 119–alanine 132 show a composition bias toward polar residues. Residues proline 148–serine 166 show a composition bias toward low complexity. Residues serine 167–proline 183 are compositionally biased toward pro residues. Residues serine 236–serine 265 are compositionally biased toward polar residues. Aspartate 467 (nucleophile) is an active-site residue.

Belongs to the 5'-nucleotidase type 3 family. Mg(2+) is required as a cofactor. As to expression, highly expressed in testis, placenta and pancreas. Detected at lower levels in heart, kidney, liver and lung.

It localises to the cytoplasm. It catalyses the reaction a ribonucleoside 5'-phosphate + H2O = a ribonucleoside + phosphate. The enzyme catalyses AMP + H2O = adenosine + phosphate. With respect to regulation, activated by ADP. Functionally, catalyzes the hydrolysis of nucleotide monophosphates, releasing inorganic phosphate and the corresponding nucleoside, AMP is the major substrate. The chain is Cytosolic 5'-nucleotidase 1B (NT5C1B) from Homo sapiens (Human).